A 319-amino-acid polypeptide reads, in one-letter code: F-box only protein 8 (319 aa).

An F-box domain is found at phenylalanine 68–leucine 111. Residues phenylalanine 146 to serine 276 form the SEC7 domain.

In terms of tissue distribution, high expression in brain, heart, kidney, liver, lung, skeletal muscle, testis, and day-7 embryos.

In terms of biological role, may promote guanine-nucleotide exchange on an ARF. Promotes the activation of ARF through replacement of GDP with GTP (Potential). In Mus musculus (Mouse), this protein is F-box only protein 8 (Fbxo8).